Here is a 225-residue protein sequence, read N- to C-terminus: UPF0758 protein Swoo_4561 (225 aa).

Positions 102 to 224 (ILSDPDLTRD…IVSFAERGWI (123 aa)) constitute an MPN domain. Positions 173, 175, and 186 each coordinate Zn(2+). The JAMM motif motif lies at 173 to 186 (HNHPSGVAEPSHAD).

It belongs to the UPF0758 family.

This chain is UPF0758 protein Swoo_4561, found in Shewanella woodyi (strain ATCC 51908 / MS32).